The following is a 193-amino-acid chain: Signal peptidase I T (193 aa).

At 1-25 (MTEEKNTNTEKTAKKKTNTYLEWGK) the chain is on the cytoplasmic side. The chain crosses the membrane as a helical span at residues 26–42 (AIVIAVLLALLIRHFLF). The Extracellular portion of the chain corresponds to 43 to 193 (EPYLVEGSSM…FPFNEMRQTK (151 aa)). Residues Ser51 and Lys93 contribute to the active site.

The protein belongs to the peptidase S26 family.

It is found in the cell membrane. It catalyses the reaction Cleavage of hydrophobic, N-terminal signal or leader sequences from secreted and periplasmic proteins.. The protein is Signal peptidase I T (sipT) of Bacillus subtilis (strain 168).